Here is a 471-residue protein sequence, read N- to C-terminus: Nuclear receptor subfamily 0 group B member 1 (471 aa).

3 repeat units span residues 1–67 (MAGE…YRCC), 68–134 (FCGE…YRCC), and 135–201 (FCGE…YRCC). Positions 1–253 (MAGEDHQWQG…QRVALKSPQV (253 aa)) are 4 X 67 AA tandem repeats. 3 consecutive short sequence motifs (LXXLL motif) follow at residues 13–17 (LYNML), 80–84 (LYNML), and 147–151 (LYSLL). The 4; truncated repeat unit spans residues 202 to 253 (FCGEDHPRQSGILCNMPMSAKQTHVAPEAQPGAPWWDPSCAAQRVALKSPQV). An NR LBD domain is found at 210–470 (QSGILCNMPM…DMMLEMLCAK (261 aa)). Residues 462–467 (MMLEML) carry the AF-2 motif motif.

Belongs to the nuclear hormone receptor family. NR0 subfamily. In terms of assembly, homodimer. Interacts with NR5A1, NR5A2, NR0B2 and with COPS2. Interacts with ESRRB; represses ESRRB activity at the GATA6 promoter.

Its subcellular location is the nucleus. It is found in the cytoplasm. Its function is as follows. Nuclear receptor that lacks a DNA-binding domain and acts as a corepressor that inhibits the transcriptional activity of other nuclear receptors through heterodimeric interactions. Component of a cascade required for the development of the hypothalamic-pituitary-adrenal-gonadal axis. May also have a role in the development of the embryo and in the maintenance of embryonic stem cell pluripotency. The protein is Nuclear receptor subfamily 0 group B member 1 (NR0B1) of Sus scrofa (Pig).